The chain runs to 114 residues: Large ribosomal subunit protein uL22 (114 aa).

This sequence belongs to the universal ribosomal protein uL22 family. In terms of assembly, part of the 50S ribosomal subunit.

Functionally, this protein binds specifically to 23S rRNA; its binding is stimulated by other ribosomal proteins, e.g. L4, L17, and L20. It is important during the early stages of 50S assembly. It makes multiple contacts with different domains of the 23S rRNA in the assembled 50S subunit and ribosome. In terms of biological role, the globular domain of the protein is located near the polypeptide exit tunnel on the outside of the subunit, while an extended beta-hairpin is found that lines the wall of the exit tunnel in the center of the 70S ribosome. This is Large ribosomal subunit protein uL22 from Streptococcus mutans serotype c (strain ATCC 700610 / UA159).